The chain runs to 701 residues: Polyribonucleotide nucleotidyltransferase (701 aa).

The Mg(2+) site is built by Asp-485 and Asp-491. The KH domain maps to 552–611 (PKIFKTTVDPEKIRDIIGPGGKMINKIIAETNVKIDIEPDGRIFVAAPDDISGNRAISMI). The 69-residue stretch at 621–689 (GQFFLGKVTR…KLGRLSLSRK (69 aa)) folds into the S1 motif domain.

This sequence belongs to the polyribonucleotide nucleotidyltransferase family. Requires Mg(2+) as cofactor.

The protein resides in the cytoplasm. It carries out the reaction RNA(n+1) + phosphate = RNA(n) + a ribonucleoside 5'-diphosphate. Its function is as follows. Involved in mRNA degradation. Catalyzes the phosphorolysis of single-stranded polyribonucleotides processively in the 3'- to 5'-direction. This Caldicellulosiruptor bescii (strain ATCC BAA-1888 / DSM 6725 / KCTC 15123 / Z-1320) (Anaerocellum thermophilum) protein is Polyribonucleotide nucleotidyltransferase.